Reading from the N-terminus, the 868-residue chain is Probable beta-glucosidase F (868 aa).

The N-terminal stretch at Met1–Ala20 is a signal peptide. A disordered region spans residues Ser21–Tyr40. Asn65, Asn73, and Asn257 each carry an N-linked (GlcNAc...) asparagine glycan. Asp285 is an active-site residue. Asn328, Asn360, Asn395, Asn421, and Asn726 each carry an N-linked (GlcNAc...) asparagine glycan. Residues Tyr731 to Gly752 form a disordered region.

It belongs to the glycosyl hydrolase 3 family.

It localises to the secreted. It catalyses the reaction Hydrolysis of terminal, non-reducing beta-D-glucosyl residues with release of beta-D-glucose.. Its pathway is glycan metabolism; cellulose degradation. Functionally, beta-glucosidases are one of a number of cellulolytic enzymes involved in the degradation of cellulosic biomass. Catalyzes the last step releasing glucose from the inhibitory cellobiose. This Emericella nidulans (strain FGSC A4 / ATCC 38163 / CBS 112.46 / NRRL 194 / M139) (Aspergillus nidulans) protein is Probable beta-glucosidase F (bglF).